The chain runs to 195 residues: Ras-related protein Rab-31 (195 aa).

GTP contacts are provided by glycine 16, glycine 18, lysine 19, serine 20, serine 21, aspartate 32, and histidine 33. Residue serine 20 participates in Mg(2+) binding. 2 consecutive short sequence motifs (switch) follow at residues 30-42 (HFDH…IGAS) and 63-79 (AGQE…YRGS). The residue at position 36 (serine 36) is a Phosphoserine. GTP contacts are provided by threonine 38, glycine 64, asparagine 119, aspartate 122, alanine 150, and lysine 151. Threonine 38 serves as a coordination point for Mg(2+). 2 S-geranylgeranyl cysteine lipidation sites follow: cysteine 194 and cysteine 195.

The protein belongs to the small GTPase superfamily. Rab family. In terms of assembly, interacts with OCRL. Interacts with NGFR. Interacts (in GDP-bound form) with RIN3 and GAPVD1, which function as guanine exchange factors (GEF). Interacts (in GTP-bound form) with EEA1. Interacts with EGFR. Interacts (in GTP-bound form) with APPL2; interaction contributes to or enhances recruitment of APPL2 to the phagosomes; interaction enhances Fc-gamma receptor-mediated phagocytosis through PI3K/Akt signaling in macrophages. Requires Mg(2+) as cofactor. As to expression, highest expression in placenta and brain with lower levels in heart and lung. Not detected in liver, skeletal muscle, kidney or pancreas.

The protein localises to the golgi apparatus. It is found in the trans-Golgi network. The protein resides in the trans-Golgi network membrane. It localises to the early endosome. Its subcellular location is the cytoplasmic vesicle. The protein localises to the phagosome. It is found in the phagosome membrane. The enzyme catalyses GTP + H2O = GDP + phosphate + H(+). Regulated by guanine nucleotide exchange factors (GEFs) including RIN3 and GAPVD1 which promote the exchange of bound GDP for free GTP. Regulated by GTPase activating proteins (GAPs) which increase the GTP hydrolysis activity. Inhibited by GDP dissociation inhibitors (GDIs) which prevent Rab-GDP dissociation. The small GTPases Rab are key regulators of intracellular membrane trafficking, from the formation of transport vesicles to their fusion with membranes. Rabs cycle between an inactive GDP-bound form and an active GTP-bound form that is able to recruit to membranes different set of downstream effectors directly responsible for vesicle formation, movement, tethering and fusion. Required for the integrity and for normal function of the Golgi apparatus and the trans-Golgi network. Plays a role in insulin-stimulated translocation of GLUT4 to the cell membrane. Plays a role in M6PR transport from the trans-Golgi network to endosomes. Plays a role in the internalization of EGFR from the cell membrane into endosomes. Plays a role in the maturation of phagosomes that engulf pathogens, such as S.aureus and M.tuberculosis. The sequence is that of Ras-related protein Rab-31 from Homo sapiens (Human).